Here is a 323-residue protein sequence, read N- to C-terminus: Tumor-associated calcium signal transducer 2 (323 aa).

Residues 1 to 26 (MARGPGLAPPPLRLPLLLLVLAAVTG) form the signal peptide. Residues 27–274 (HTAAQDNCTC…PPKFSMKRLT (248 aa)) are Extracellular-facing. A glycan (N-linked (GlcNAc...) asparagine) is linked at Asn33. The Thyroglobulin type-1 domain occupies 70 to 145 (TSKCLLLKAR…TDKGDLSLRC (76 aa)). Disulfide bonds link Cys73–Cys108, Cys119–Cys125, and Cys127–Cys145. A glycan (N-linked (GlcNAc...) asparagine) is linked at Asn120. N-linked (GlcNAc...) asparagine glycosylation is found at Asn168 and Asn208. The helical transmembrane segment at 275-297 (AGLIAVIVVVVVALVAGMAVLVI) threads the bilayer. Residues 298–323 (TNRRKSGKYKKVEIKELGELRKEPSL) are Cytoplasmic-facing.

The protein belongs to the EPCAM family. The N-terminus is blocked. As to expression, placenta, pancreatic carcinoma cell lines.

The protein resides in the membrane. In terms of biological role, may function as a growth factor receptor. This chain is Tumor-associated calcium signal transducer 2 (TACSTD2), found in Homo sapiens (Human).